A 161-amino-acid chain; its full sequence is Trivalent organoarsenical cleaving enzyme (161 aa).

The region spanning 2-119 (KYAHVGLNVT…DGNEWEFFYT (118 aa)) is the VOC domain. Residues His5 and His62 each contribute to the Fe(2+) site. 2 residues coordinate roxarsone (III): Cys96 and Cys97. Fe(2+) is bound at residue Glu115.

Requires Fe(2+) as cofactor.

The enzyme catalyses methylarsonous acid + AH2 + O2 = arsenite + methanol + A + H(+). The catalysed reaction is roxarsone (III) + AH2 + O2 = 4-hydroxy-3-nitrocyclohexa-2,5-dien-1-one + arsenite + A + H(+). It catalyses the reaction nitarsone (III) + AH2 + O2 = 4-nitrocyclohexa-2,5-dien-1-one + arsenite + A + H(+). It carries out the reaction 4-aminophenylarsonous acid + AH2 + O2 = 4-aminocyclohexa-2,5-dien-1-one + arsenite + A. With respect to regulation, inhibited in vitro by reagents that chemically modify histidine residues (diethylpyrocarbonate (DEPC)), aspartate or glutamate residues (1-ethyl-3-(3-(dimethylamino)propyl) carbodiimide (EDC)), or cysteine residues (N-ethylmaleimide (NEM) or iodoacetamide (IAA)). In terms of biological role, nonheme iron-dependent dioxygenase that can break carbon-arsenic bonds, playing a role in the detoxification of environmental organoarsenical compounds. Catalyzes the oxygen-dependent demethylation of highly toxic methylarsonous acid (MAs(III)) to arsenite, which can then be exported out of the cell. Can also cleave the C-As bond in several trivalent aromatic arsenicals, including roxarsone (III), nitarsone (III) and (4-aminophenyl)arsonous acid. Organoarsenical degradation by this enzyme is proposed to have a significant impact on the arsenic biogeocycle that maintains a balance between organic and inorganic species. This Bacillus sp. (strain MD1) protein is Trivalent organoarsenical cleaving enzyme.